The sequence spans 182 residues: Dual-action ribosomal maturation protein DarP (182 aa).

Belongs to the DarP family.

The protein localises to the cytoplasm. In terms of biological role, member of a network of 50S ribosomal subunit biogenesis factors which assembles along the 30S-50S interface, preventing incorrect 23S rRNA structures from forming. Promotes peptidyl transferase center (PTC) maturation. In Yersinia pseudotuberculosis serotype O:1b (strain IP 31758), this protein is Dual-action ribosomal maturation protein DarP.